The chain runs to 336 residues: DNA-directed RNA polymerase subunit alpha (336 aa).

An alpha N-terminal domain (alpha-NTD) region spans residues methionine 1 to aspartate 232. Residues phenylalanine 248–tyrosine 336 are alpha C-terminal domain (alpha-CTD).

The protein belongs to the RNA polymerase alpha chain family. Homodimer. The RNAP catalytic core consists of 2 alpha, 1 beta, 1 beta' and 1 omega subunit. When a sigma factor is associated with the core the holoenzyme is formed, which can initiate transcription.

The enzyme catalyses RNA(n) + a ribonucleoside 5'-triphosphate = RNA(n+1) + diphosphate. Its function is as follows. DNA-dependent RNA polymerase catalyzes the transcription of DNA into RNA using the four ribonucleoside triphosphates as substrates. In Rhizobium rhizogenes (strain K84 / ATCC BAA-868) (Agrobacterium radiobacter), this protein is DNA-directed RNA polymerase subunit alpha.